The following is a 243-amino-acid chain: Small ribosomal subunit protein mS23 (243 aa).

Belongs to the mitochondrion-specific ribosomal protein mS23 family. In terms of assembly, component of the mitochondrial small ribosomal subunit.

The protein resides in the mitochondrion. The protein is Small ribosomal subunit protein mS23 (rsm25) of Emericella nidulans (strain FGSC A4 / ATCC 38163 / CBS 112.46 / NRRL 194 / M139) (Aspergillus nidulans).